The primary structure comprises 209 residues: Glycolipid transfer protein B (209 aa).

2 tandem repeats follow at residues 45-55 (IKADITGNITK) and 56-66 (IRSVYESNPTQ). The 2 X 12 AA approximate tandem repeats stretch occupies residues 45-66 (IKADITGNITKIRSVYESNPTQ). A beta-D-galactosyl-(1-&gt;4)-beta-D-glucosyl-(1&lt;-&gt;1)-N-[(9Z)-octadecenoyl]-sphing-4-enine-binding site is contributed by 48–55 (DITGNITK). 2 residues coordinate beta-D-galactosyl-(1-&gt;4)-beta-D-glucosyl-(1&lt;-&gt;1)-N-[(9Z)-octadecenoyl]-sphing-4-enine: His140 and Tyr207.

Belongs to the GLTP family.

The protein localises to the cytoplasm. In terms of biological role, accelerates the intermembrane transfer of various glycolipids. Catalyzes the transfer of various glycosphingolipids between membranes but does not catalyze the transfer of phospholipids. May be involved in the intracellular translocation of glucosylceramides. The protein is Glycolipid transfer protein B (gltp-b) of Xenopus laevis (African clawed frog).